The chain runs to 227 residues: Ribonuclease 3 (227 aa).

The region spanning 3-130 is the RNase III domain; sequence TNAISKIIKY…LIGAIYLDGG (128 aa). Residue glutamate 43 coordinates Mg(2+). The active site involves aspartate 47. 2 residues coordinate Mg(2+): asparagine 116 and glutamate 119. Glutamate 119 is a catalytic residue. In terms of domain architecture, DRBM spans 155–224; sequence DAKTILQEWA…ASLMLAKINY (70 aa).

This sequence belongs to the ribonuclease III family. Homodimer. Mg(2+) serves as cofactor.

It localises to the cytoplasm. The enzyme catalyses Endonucleolytic cleavage to 5'-phosphomonoester.. Its function is as follows. Digests double-stranded RNA. Involved in the processing of primary rRNA transcript to yield the immediate precursors to the large and small rRNAs (23S and 16S). Processes some mRNAs, and tRNAs when they are encoded in the rRNA operon. Processes pre-crRNA and tracrRNA of type II CRISPR loci if present in the organism. This chain is Ribonuclease 3, found in Ehrlichia ruminantium (strain Welgevonden).